A 479-amino-acid polypeptide reads, in one-letter code: Alpha,alpha-trehalose-phosphate synthase [UDP-forming] 2 (479 aa).

Tyrosine 96 and aspartate 150 together coordinate D-glucose 6-phosphate. The UDP site is built by arginine 287 and lysine 292. Positions 287 and 292 each coordinate UDP-alpha-D-glucose. Arginine 325 lines the D-glucose 6-phosphate pocket. Residues 363-364 and 390-394 contribute to the UDP site; these read SV and LVSFE. 386–394 serves as a coordination point for UDP-alpha-D-glucose; it reads DGMNLVSFE.

This sequence belongs to the glycosyltransferase 20 family.

It catalyses the reaction D-glucose 6-phosphate + UDP-alpha-D-glucose = alpha,alpha-trehalose 6-phosphate + UDP + H(+). Its pathway is carbohydrate biosynthesis. Its function is as follows. Synthase catalytic subunit of the trehalose synthase complex that catalyzes the production of trehalose from glucose-6-phosphate and UDP-alpha-D-glucose in a two step process. The disaccharide trehalose serves as a storage carbohydrate that is mobilized during conidial germination. Regulates the level of trehalose as a protectant for cell integrity during thermal and oxidative stress. This chain is Alpha,alpha-trehalose-phosphate synthase [UDP-forming] 2, found in Aspergillus fumigatus (strain ATCC MYA-4609 / CBS 101355 / FGSC A1100 / Af293) (Neosartorya fumigata).